The chain runs to 202 residues: Secreted RxLR effector protein 11 (202 aa).

The first 23 residues, 1-23 (MRLNFTKLFAGAVALAWTTESMA), serve as a signal peptide directing secretion. The short motif at 49–61 (RRLRTINGADEER) is the RxLR-dEER element.

Belongs to the RxLR effector family.

It localises to the secreted. The protein localises to the host cytoplasm. It is found in the host nucleus. In terms of biological role, effector that acts as a broad suppressor of cell death to interrupt plant immunity. Inhibits cell death induced by cell death-inducing proteins, including the PAMP elicitor INF1 from P.infestans. In Plasmopara viticola (Downy mildew of grapevine), this protein is Secreted RxLR effector protein 11.